The chain runs to 229 residues: Peptidase E (229 aa).

Catalysis depends on charge relay system residues Ser120, Asp135, and His157.

The protein belongs to the peptidase S51 family.

It localises to the cytoplasm. It catalyses the reaction Dipeptidase E catalyzes the hydrolysis of dipeptides Asp-|-Xaa. It does not act on peptides with N-terminal Glu, Asn or Gln, nor does it cleave isoaspartyl peptides.. Hydrolyzes dipeptides containing N-terminal aspartate residues. May play a role in allowing the cell to use peptide aspartate to spare carbon otherwise required for the synthesis of the aspartate family of amino acids. In Salmonella typhimurium (strain LT2 / SGSC1412 / ATCC 700720), this protein is Peptidase E (pepE).